Consider the following 170-residue polypeptide: Adenine phosphoribosyltransferase (170 aa).

Belongs to the purine/pyrimidine phosphoribosyltransferase family. In terms of assembly, homodimer.

The protein resides in the cytoplasm. The catalysed reaction is AMP + diphosphate = 5-phospho-alpha-D-ribose 1-diphosphate + adenine. The protein operates within purine metabolism; AMP biosynthesis via salvage pathway; AMP from adenine: step 1/1. Functionally, catalyzes a salvage reaction resulting in the formation of AMP, that is energically less costly than de novo synthesis. This chain is Adenine phosphoribosyltransferase, found in Thermosipho africanus (strain TCF52B).